A 479-amino-acid polypeptide reads, in one-letter code: Probable periplasmic serine endoprotease DegP-like (479 aa).

Residues Met1–Ala27 form the signal peptide. Residues His117, Asp147, and Ser220 each act as charge relay system in the active site. Residues Gly218–Ser220 and Leu275–Ile279 contribute to the substrate site. PDZ domains lie at Leu264–Gly355 and Asp361–Gly468. The interval Pro368–Val395 is disordered.

It belongs to the peptidase S1C family.

The protein resides in the periplasm. The enzyme catalyses Acts on substrates that are at least partially unfolded. The cleavage site P1 residue is normally between a pair of hydrophobic residues, such as Val-|-Val.. Its function is as follows. Might be efficient in the degradation of transiently denatured and unfolded proteins which accumulate in the periplasm following stress conditions. In Pseudomonas putida (strain W619), this protein is Probable periplasmic serine endoprotease DegP-like.